The sequence spans 256 residues: MFKKLKNKNKTETNHNNDLDIHNIPEHVAIIMDGNGRWAKKRKMPRIKGHYEGMQTIKKITREASDIGIKYLTLYAFSTENWSRPESEVNYIMNLPVNFLKTFLPELIEKNVKIETIGFYEGLPQSTIDAIDFAKAKTQHNTGLTLVFAINYGGRAEIIQSMKAIYNELQLNGQGSEVIDEALIKRHLMTHSYPDPDLLIRTSGEQRISNFLIWQASYSEFIFNEKLWPDFDEKELRECLKIYQSRQRRFGGLSEE.

D33 is a catalytic residue. D33 serves as a coordination point for Mg(2+). Substrate contacts are provided by residues 34 to 37, W38, R46, H50, and 78 to 80; these read GNGR and STE. N81 serves as the catalytic Proton acceptor. Substrate contacts are provided by residues W82, R84, R201, and 207 to 209; that span reads RIS. E220 contributes to the Mg(2+) binding site.

It belongs to the UPP synthase family. As to quaternary structure, homodimer. Mg(2+) is required as a cofactor.

In terms of biological role, catalyzes the condensation of isopentenyl diphosphate (IPP) with allylic pyrophosphates generating different type of terpenoids. The sequence is that of Isoprenyl transferase from Staphylococcus epidermidis (strain ATCC 35984 / DSM 28319 / BCRC 17069 / CCUG 31568 / BM 3577 / RP62A).